A 1178-amino-acid polypeptide reads, in one-letter code: Mannosyltransferase regulator 4 (1178 aa).

Topologically, residues 1–27 (MLQRISSKLHRRFLSGLLRVKHYPLRR) are cytoplasmic. A helical; Signal-anchor for type II membrane protein transmembrane segment spans residues 28–48 (ILLPLILLQIIIITFIWSNSP). Over 49–1178 (QRNGLGRDAD…KKKQEEGHSN (1130 aa)) the chain is Lumenal. The short motif at 519–521 (DFD) is the DXD element. Positions 1041 to 1178 (EKKKKEEEEK…KKKQEEGHSN (138 aa)) are disordered. 6 repeat units span residues 1042 to 1049 (KKKKEEEE), 1050 to 1057 (KKKKEEEE), 1058 to 1065 (KKKKEEEE), 1066 to 1073 (KKKKEEEE), 1074 to 1081 (KKKKEEEE), and 1082 to 1089 (KKKKEEEE). The interval 1042 to 1174 (KKKKEEEEKK…EEEEKKKQEE (133 aa)) is 17 X 8 AA tandem repeats of K-K-K-K-E-E-E-E. One copy of the 7; approximate repeat lies at 1090-1097 (KKKQEEEE). Copy 8 of the repeat occupies 1098 to 1105 (KKKKEEEE). A 9; approximate repeat occupies 1106-1113 (KKKQEEGE). The 10; approximate repeat unit spans residues 1114 to 1121 (KMKNEDEE). The stretch at 1122 to 1129 (NKKNEDEE) is one 11; approximate repeat. Copy 12 of the repeat occupies 1130-1137 (KKKNEEEE). A 13; approximate repeat occupies 1138 to 1144 (KKKQEEK). Residues 1145-1152 (NKKNEDEE) form a 14; approximate repeat. Residues 1153–1160 (KKKQEEEE) form a 15; approximate repeat. Residues 1161–1168 (KKKNEEEE) form a 16; approximate repeat. The stretch at 1169–1174 (KKKQEE) is one 17; truncated repeat.

Belongs to the MNN4 family.

It is found in the golgi apparatus membrane. Golgi apparatus protein involved in N-glycan mannosylphosphorylation. While MNN4 seems to have a regulatory role in N-glycan mannosylphosphorylation, a transferase activity of MNN4 can not be ruled out. Mediates mannosylphosphate transfer in both the core and outer chain portions of N-linked oligosaccharides. Has partially redundant function with MNN14. This Saccharomyces cerevisiae (strain ATCC 204508 / S288c) (Baker's yeast) protein is Mannosyltransferase regulator 4.